We begin with the raw amino-acid sequence, 497 residues long: Carboxypeptidase Y homolog ARB_02032 (497 aa).

The first 18 residues, 1–18 (MRFTQIVAAALCLGATEA), serve as a signal peptide directing secretion. A glycan (N-linked (GlcNAc...) asparagine) is linked at asparagine 88. Serine 204 is an active-site residue. N-linked (GlcNAc...) asparagine glycans are attached at residues asparagine 263 and asparagine 393. The active site involves aspartate 403. Asparagine 417 is a glycosylation site (N-linked (GlcNAc...) asparagine). The active site involves histidine 469.

The protein belongs to the peptidase S10 family.

It is found in the secreted. It carries out the reaction Release of a C-terminal amino acid with broad specificity.. Its function is as follows. Involved in degradation of small peptides. The protein is Carboxypeptidase Y homolog ARB_02032 of Arthroderma benhamiae (strain ATCC MYA-4681 / CBS 112371) (Trichophyton mentagrophytes).